We begin with the raw amino-acid sequence, 256 residues long: 2-C-methyl-D-erythritol 4-phosphate cytidylyltransferase (256 aa).

Belongs to the IspD/TarI cytidylyltransferase family. IspD subfamily.

It carries out the reaction 2-C-methyl-D-erythritol 4-phosphate + CTP + H(+) = 4-CDP-2-C-methyl-D-erythritol + diphosphate. Its pathway is isoprenoid biosynthesis; isopentenyl diphosphate biosynthesis via DXP pathway; isopentenyl diphosphate from 1-deoxy-D-xylulose 5-phosphate: step 2/6. Functionally, catalyzes the formation of 4-diphosphocytidyl-2-C-methyl-D-erythritol from CTP and 2-C-methyl-D-erythritol 4-phosphate (MEP). The protein is 2-C-methyl-D-erythritol 4-phosphate cytidylyltransferase of Corynebacterium glutamicum (strain R).